We begin with the raw amino-acid sequence, 115 residues long: Phosphoribosyl-AMP cyclohydrolase (115 aa).

D80 contacts Mg(2+). C81 is a Zn(2+) binding site. Mg(2+)-binding residues include D82 and D84. Zn(2+)-binding residues include C97 and C104.

This sequence belongs to the PRA-CH family. As to quaternary structure, homodimer. Mg(2+) is required as a cofactor. The cofactor is Zn(2+).

The protein localises to the cytoplasm. It catalyses the reaction 1-(5-phospho-beta-D-ribosyl)-5'-AMP + H2O = 1-(5-phospho-beta-D-ribosyl)-5-[(5-phospho-beta-D-ribosylamino)methylideneamino]imidazole-4-carboxamide. The protein operates within amino-acid biosynthesis; L-histidine biosynthesis; L-histidine from 5-phospho-alpha-D-ribose 1-diphosphate: step 3/9. Its function is as follows. Catalyzes the hydrolysis of the adenine ring of phosphoribosyl-AMP. The sequence is that of Phosphoribosyl-AMP cyclohydrolase from Mycobacterium avium (strain 104).